The following is a 316-amino-acid chain: Protein prune homolog 2 (316 aa).

The interval 1-24 (MDIPLDAAEIRPEPPNSLDLNGSS) is disordered. In terms of domain architecture, CRAL-TRIO spans 128–285 (IEPYKKVISH…TIVKLDEELR (158 aa)). The disordered stretch occupies residues 287–316 (SESPKAGCLPNEPEMNTLEEEFENKMGDND).

The protein localises to the cytoplasm. This is Protein prune homolog 2 (Prune2) from Xenopus tropicalis (Western clawed frog).